The chain runs to 341 residues: Heterogeneous nuclear ribonucleoproteins A2/B1 (341 aa).

RRM domains follow at residues 9-92 (RKLF…ESGK) and 100-179 (KKLF…LSRQ). Lysine 10 participates in a covalent cross-link: Glycyl lysine isopeptide (Lys-Gly) (interchain with G-Cter in SUMO2). Serine 17 carries the post-translational modification Phosphoserine. At arginine 26 the chain carries Omega-N-methylarginine. Serine 73 carries the phosphoserine modification. Lysine 92 carries the N6,N6-dimethyllysine; alternate modification. Lysine 92 participates in a covalent cross-link: Glycyl lysine isopeptide (Lys-Gly) (interchain with G-Cter in SUMO2); alternate. Residues lysine 100, lysine 108, and lysine 125 each participate in a glycyl lysine isopeptide (Lys-Gly) (interchain with G-Cter in SUMO2) cross-link. Threonine 128 is modified (phosphothreonine). Phosphoserine is present on serine 137. Residue lysine 140 forms a Glycyl lysine isopeptide (Lys-Gly) (interchain with G-Cter in SUMO2) linkage. Phosphothreonine is present on threonine 147. Glycyl lysine isopeptide (Lys-Gly) (interchain with G-Cter in SUMO2); alternate cross-links involve residues lysine 156 and lysine 161. Residues lysine 156 and lysine 161 each carry the N6-acetyllysine; alternate modification. Position 164 is a phosphothreonine (threonine 164). Lysine 174 participates in a covalent cross-link: Glycyl lysine isopeptide (Lys-Gly) (interchain with G-Cter in SUMO2). Serine 177 and serine 189 each carry phosphoserine. Residues 181-341 (MQEVQSSRSG…SGGYGGRSRY (161 aa)) are disordered. Positions 190–211 (GRGGNFGFGDSRGGGGNFGPGP) are enriched in gly residues. Arginine 191 is modified (asymmetric dimethylarginine; alternate). A Dimethylated arginine; alternate modification is found at arginine 191. Arginine 191 is modified (omega-N-methylarginine; alternate). Position 200 is a phosphoserine (serine 200). Arginine 201 carries the asymmetric dimethylarginine; alternate modification. Residue arginine 201 is modified to Dimethylated arginine; alternate. Arginine 201 carries the omega-N-methylarginine; alternate modification. Serine 213 carries the post-translational modification Phosphoserine. Arginine 216 bears the Omega-N-methylarginine mark. A phosphoserine mark is found at serine 219 and serine 224. Residue arginine 226 is modified to Omega-N-methylarginine. Serine 247 is subject to Phosphoserine. Arginine 254 carries the asymmetric dimethylarginine; alternate modification. An Omega-N-methylarginine; alternate modification is found at arginine 254. Positions 296–335 (QQPSNYGPMKSGNFGGSRNMGGPYGGGNYGPGGSGGSGGY) are nuclear targeting sequence. A compositionally biased stretch (gly residues) spans 308–341 (NFGGSRNMGGPYGGGNYGPGGSGGSGGYGGRSRY). At serine 312 the chain carries Phosphoserine. Position 313 is an omega-N-methylarginine (arginine 313). Residue tyrosine 319 is modified to Phosphotyrosine. Serine 329 and serine 332 each carry phosphoserine. Tyrosine 335 carries the phosphotyrosine modification. Omega-N-methylarginine is present on arginine 338.

Identified in the spliceosome C complex. Identified in a IGF2BP1-dependent mRNP granule complex containing untranslated mRNAs. Interacts with IGF2BP1. Interacts with C9orf72. Interacts with DGCR8. Interacts with TARDBP. Interacts with CKAP5. Interacts with PPIA/CYPA. Interacts (via C-terminus) with FAM76B; the interaction results in retention of HNRNPA2B1 in the nucleus and inhibition of the NF-kappa-B-mediated inflammatory pathway. Interacts with NF-kappa-B inhibitors NFKBIA and NFKBIE; the interaction may be mediated by the RRM2 domain of HNRNPA2B1, and HNRNPA2B1 may interact simultaneously with FAM76B and either NFKBIA or NFKBIE to form a complex. Post-translationally, sumoylated in exosomes, promoting miRNAs-binding. Asymmetric dimethylation at Arg-254 constitutes the major methylation site. According to a report, methylation affects subcellular location and promotes nuclear localization. According to another report, methylation at Arg-254 does not influence nucleocytoplasmic shuttling.

It localises to the nucleus. The protein resides in the nucleoplasm. Its subcellular location is the cytoplasmic granule. The protein localises to the secreted. It is found in the extracellular exosome. Its function is as follows. Heterogeneous nuclear ribonucleoprotein (hnRNP) that associates with nascent pre-mRNAs, packaging them into hnRNP particles. The hnRNP particle arrangement on nascent hnRNA is non-random and sequence-dependent and serves to condense and stabilize the transcripts and minimize tangling and knotting. Packaging plays a role in various processes such as transcription, pre-mRNA processing, RNA nuclear export, subcellular location, mRNA translation and stability of mature mRNAs. Forms hnRNP particles with at least 20 other different hnRNP and heterogeneous nuclear RNA in the nucleus. Involved in transport of specific mRNAs to the cytoplasm in oligodendrocytes and neurons: acts by specifically recognizing and binding the A2RE (21 nucleotide hnRNP A2 response element) or the A2RE11 (derivative 11 nucleotide oligonucleotide) sequence motifs present on some mRNAs, and promotes their transport to the cytoplasm. Specifically binds single-stranded telomeric DNA sequences, protecting telomeric DNA repeat against endonuclease digestion. Also binds other RNA molecules, such as primary miRNA (pri-miRNAs): acts as a nuclear 'reader' of the N6-methyladenosine (m6A) mark by specifically recognizing and binding a subset of nuclear m6A-containing pri-miRNAs. Binding to m6A-containing pri-miRNAs promotes pri-miRNA processing by enhancing binding of DGCR8 to pri-miRNA transcripts. Involved in miRNA sorting into exosomes following sumoylation, possibly by binding (m6A)-containing pre-miRNAs. Acts as a regulator of efficiency of mRNA splicing, possibly by binding to m6A-containing pre-mRNAs. Plays a role in the splicing of pyruvate kinase PKM by binding repressively to sequences flanking PKM exon 9, inhibiting exon 9 inclusion and resulting in exon 10 inclusion and production of the PKM M2 isoform. The chain is Heterogeneous nuclear ribonucleoproteins A2/B1 (HNRNPA2B1) from Saguinus oedipus (Cotton-top tamarin).